The chain runs to 322 residues: tRNA U34 carboxymethyltransferase (322 aa).

Residues K90, W104, K109, G129, 151 to 153, 179 to 180, M195, Y199, and R314 each bind carboxy-S-adenosyl-L-methionine; these read DPT and ME.

Belongs to the class I-like SAM-binding methyltransferase superfamily. CmoB family. In terms of assembly, homotetramer.

The enzyme catalyses carboxy-S-adenosyl-L-methionine + 5-hydroxyuridine(34) in tRNA = 5-carboxymethoxyuridine(34) in tRNA + S-adenosyl-L-homocysteine + H(+). Catalyzes carboxymethyl transfer from carboxy-S-adenosyl-L-methionine (Cx-SAM) to 5-hydroxyuridine (ho5U) to form 5-carboxymethoxyuridine (cmo5U) at position 34 in tRNAs. This is tRNA U34 carboxymethyltransferase from Alcanivorax borkumensis (strain ATCC 700651 / DSM 11573 / NCIMB 13689 / SK2).